The chain runs to 216 residues: Calcium-binding protein 2 (216 aa).

Residues 1-41 are disordered; sequence MGNCAKTPWHRGSKERWQWPGSPLGGSRPSPGPRTEEQEGT. G2 carries N-myristoyl glycine lipidation. Residues 20–29 show a composition bias toward low complexity; sequence PGSPLGGSRP. EF-hand domains are found at residues 74-109, 125-142, 148-183, and 185-216; these read EEIEELQIAFQEFDRDRDGYIGYRELGACMRTLGYM, GKVDFEDFVELMGPKLLA, IGVRELRDAFREFDTNGDGCISVGELRAALKALLGE, and LSQREVDEILQDIDLNGDGLVDFEEFVRMMSR. 5 residues coordinate Ca(2+): D87, D89, D91, Y93, and E98. Positions 161, 163, 165, 167, 172, 198, 200, 202, and 209 each coordinate Ca(2+).

As to expression, expressed in the inner hair cells (IHCs), outer hair cells,(OHCs) and vestibular hair cells within the ear and in the retina (at protein level). Expressed in the retinal cone type 6 ON-bipolar cells and type 1 OFF-bipolar cells (at protein level). Expressed in the organ of Corti and spiral ganglion neurons in the cochlea (at protein level).

The protein resides in the cytoplasm. The protein localises to the perinuclear region. Its subcellular location is the cell membrane. It localises to the golgi apparatus. Required for sound encoding at inner hair cells (IHCs) synapses, likely via inhibition of the inactivation of voltage-gated calcium channel of type 1.3 (Cav1.3) in the IHCs. Required for the normal transfer of light signals through the retina. The chain is Calcium-binding protein 2 (Cabp2) from Mus musculus (Mouse).